Consider the following 605-residue polypeptide: Glucose oxidase (605 aa).

An N-terminal signal peptide occupies residues 1–16 (MQTLLVSSLVVSLAAA). Residues leucine 51 and threonine 52 each contribute to the FAD site. Asparagine 65 carries N-linked (GlcNAc...) asparagine glycosylation. Residue glutamate 72 participates in FAD binding. A glycan (N-linked (GlcNAc...) asparagine) is linked at asparagine 111. Serine 125, asparagine 129, glycine 130, and threonine 132 together coordinate FAD. N-linked (GlcNAc...) asparagine glycosylation is found at asparagine 183 and asparagine 190. A disulfide bridge links cysteine 186 with cysteine 228. FAD is bound at residue valine 272. Asparagine 280, asparagine 377, asparagine 410, and asparagine 495 each carry an N-linked (GlcNAc...) asparagine glycan. Histidine 538 functions as the Proton acceptor in the catalytic mechanism. Positions 559 and 560 each coordinate O2. FAD-binding residues include glycine 571 and methionine 583.

It belongs to the GMC oxidoreductase family. Homodimer. The cofactor is FAD. In terms of processing, the N-linked sugar chains of the glucose oxidase contributed to the high solubility of the enzyme in water.

It localises to the secreted. The protein localises to the cell wall. It is found in the cytoplasm. Its subcellular location is the extracellular space. The protein resides in the extracellular matrix. The catalysed reaction is beta-D-glucose + O2 = D-glucono-1,5-lactone + H2O2. Functionally, glucose oxidase catalyzes the oxidation of beta-D-glucose to D-glucono-delta-lactone and hydrogen peroxide in the presence of molecular oxygen. D-glucono-delta-lactone is sequentially hydrolyzed by lactonase to D-gluconic acid, and the resulting hydrogen peroxide is hydrolyzed by catalase to oxygen and water. The activity shows high specificity to beta-D-glucose, with very low to no activity towards L-glucose, 2-deoxy-D-glucose, 3-deoxy-D-glucose, 4-deoxy-D-glucose, 5-deoxy-D-glucose, 6-deoxy-D-glucose, 3-O-methyl-D-glucose, 4-O-methyl-D-glucose, 6-O-methyl-D-glucose, 4,6-O-benzylidene-D-glucose, 5-thio-5-deoxy-D-glucose, D-mannose, D-allose, D-galactose, D-fructose, D-arabinose, D-xylose, trehalose, melibiose, L-mannomethylose, lactose, sucrose or 1,5-anhydro-D-glucitol. This Aspergillus niger protein is Glucose oxidase.